The sequence spans 230 residues: Chalcone--flavanone isomerase (230 aa).

The substrate site is built by T52, N117, and S194.

The protein belongs to the chalcone isomerase family.

It catalyses the reaction a chalcone = a flavanone.. It participates in secondary metabolite biosynthesis; flavonoid biosynthesis. Functionally, catalyzes the intramolecular cyclization of bicyclic chalcones into tricyclic (S)-flavanones. Responsible for the isomerization of 4,2',4',6'-tetrahydroxychalcone (also termed chalcone) into naringenin. The protein is Chalcone--flavanone isomerase (CHI) of Camellia sinensis (Tea plant).